A 169-amino-acid polypeptide reads, in one-letter code: Regulator of ribonuclease activity A (169 aa).

This sequence belongs to the RraA family. In terms of assembly, homotrimer. Binds to both RNA-binding sites in the C-terminal region of Rne and to RhlB.

Its subcellular location is the cytoplasm. Globally modulates RNA abundance by binding to RNase E (Rne) and regulating its endonucleolytic activity. Can modulate Rne action in a substrate-dependent manner by altering the composition of the degradosome. Modulates RNA-binding and helicase activities of the degradosome. The chain is Regulator of ribonuclease activity A from Photorhabdus laumondii subsp. laumondii (strain DSM 15139 / CIP 105565 / TT01) (Photorhabdus luminescens subsp. laumondii).